Reading from the N-terminus, the 324-residue chain is Cysteine-rich repeat secretory protein 9 (324 aa).

Positions 1-27 (MARIIITLTIPLFYFFFFSLLSHQTMS) are cleaved as a signal peptide. 2 consecutive Gnk2-homologous domains span residues 29-132 (PDHI…NVSF) and 138-248 (IVPS…TSVL). The disordered stretch occupies residues 251 to 286 (PPPSPSAPPPRSPPPKSSPPSSLPQTPSPPLVFTPP).

The protein belongs to the cysteine-rich repeat secretory protein family.

Its subcellular location is the secreted. The protein is Cysteine-rich repeat secretory protein 9 (CRRSP9) of Arabidopsis thaliana (Mouse-ear cress).